The following is a 257-amino-acid chain: S-methyl-5'-thioadenosine phosphorylase (257 aa).

Residues serine 10 and arginine 50–histidine 51 contribute to the phosphate site. Methionine 180 is a substrate binding site. Threonine 181 contacts phosphate. Aspartate 204–aspartate 206 is a substrate binding site.

Belongs to the PNP/MTAP phosphorylase family. MTAP subfamily. Homohexamer. Dimer of a homotrimer.

The catalysed reaction is S-methyl-5'-thioadenosine + phosphate = 5-(methylsulfanyl)-alpha-D-ribose 1-phosphate + adenine. Its pathway is amino-acid biosynthesis; L-methionine biosynthesis via salvage pathway; S-methyl-5-thio-alpha-D-ribose 1-phosphate from S-methyl-5'-thioadenosine (phosphorylase route): step 1/1. In terms of biological role, catalyzes the reversible phosphorylation of S-methyl-5'-thioadenosine (MTA) to adenine and 5-methylthioribose-1-phosphate. Involved in the breakdown of MTA, a major by-product of polyamine biosynthesis. Responsible for the first step in the methionine salvage pathway after MTA has been generated from S-adenosylmethionine. Has broad substrate specificity with 6-aminopurine nucleosides as preferred substrates. In Pyrococcus horikoshii (strain ATCC 700860 / DSM 12428 / JCM 9974 / NBRC 100139 / OT-3), this protein is S-methyl-5'-thioadenosine phosphorylase.